The following is a 212-amino-acid chain: Ribonuclease HII (212 aa).

The RNase H type-2 domain maps to 20–209; it reads TCVVGVDEVG…VHNILYQEAS (190 aa). A divalent metal cation is bound by residues D26, E27, and D117.

It belongs to the RNase HII family. Requires Mn(2+) as cofactor. Mg(2+) serves as cofactor.

The protein localises to the cytoplasm. The catalysed reaction is Endonucleolytic cleavage to 5'-phosphomonoester.. In terms of biological role, endonuclease that specifically degrades the RNA of RNA-DNA hybrids. In Cereibacter sphaeroides (strain ATCC 17023 / DSM 158 / JCM 6121 / CCUG 31486 / LMG 2827 / NBRC 12203 / NCIMB 8253 / ATH 2.4.1.) (Rhodobacter sphaeroides), this protein is Ribonuclease HII.